A 137-amino-acid polypeptide reads, in one-letter code: Large ribosomal subunit protein uL16c (137 aa).

This sequence belongs to the universal ribosomal protein uL16 family. As to quaternary structure, part of the 50S ribosomal subunit.

The protein resides in the plastid. The sequence is that of Large ribosomal subunit protein uL16c from Cuscuta exaltata (Tall dodder).